The sequence spans 132 residues: Ribosome-binding factor A (132 aa).

Belongs to the RbfA family. As to quaternary structure, monomer. Binds 30S ribosomal subunits, but not 50S ribosomal subunits or 70S ribosomes.

It localises to the cytoplasm. Functionally, one of several proteins that assist in the late maturation steps of the functional core of the 30S ribosomal subunit. Associates with free 30S ribosomal subunits (but not with 30S subunits that are part of 70S ribosomes or polysomes). Required for efficient processing of 16S rRNA. May interact with the 5'-terminal helix region of 16S rRNA. In Pseudomonas entomophila (strain L48), this protein is Ribosome-binding factor A.